The sequence spans 99 residues: Microcin E492 (99 aa).

Residues 1 to 15 form the signal peptide; that stretch reads MREISQKDLNLAFGA. Residues 80–99 form a disordered region; that stretch reads SWNGSGSGYNSATSSSGSGS. A compositionally biased stretch (low complexity) spans 87-99; it reads GYNSATSSSGSGS. S99 carries the post-translational modification Serine microcin E492 siderophore ester.

Belongs to the class IIa microcin family. As to quaternary structure, multimer. Possibly forms a homodimer or a homotrimer. In terms of processing, the C-terminal Ser is modified by attachment to a siderophore similar to enterobactin, which can bind one atom of iron. The modification consists of an ester linkage of the serine carboxyl to O6 of a glucose which is linked by a C-glycosidic bond to the 5'-benzoyl of a linear triester of N-(2,3-dihydroxybenzoyl)serine. Presence of the siderophore ester increases the antibacterial activity of the protein.

Channel-forming bacteriocin. Forms cation-selective channels. Active on enterobacteria, with highest activity against E.coli. Not active on other Gram-negative bacteria, Gram-positive bacteria or fungi. The unmodified protein is active against E.coli and S.enteritidis. When the siderophore ester is present at Ser-99, antibacterial activity against these species is increased and activity is also detected against E.cloacae and K.pneumoniae. Neutralized by its immunity protein MceB. The protein is Microcin E492 of Klebsiella pneumoniae.